Reading from the N-terminus, the 154-residue chain is Ribonuclease H (154 aa).

The RNase H type-1 domain maps to 1–142 (MRKQVEIFTD…CDELARAAAS (142 aa)). The Mg(2+) site is built by Asp10, Glu48, Asp70, and Asp134.

This sequence belongs to the RNase H family. Monomer. It depends on Mg(2+) as a cofactor.

It is found in the cytoplasm. It carries out the reaction Endonucleolytic cleavage to 5'-phosphomonoester.. Its function is as follows. Endonuclease that specifically degrades the RNA of RNA-DNA hybrids. This chain is Ribonuclease H, found in Pectobacterium atrosepticum (strain SCRI 1043 / ATCC BAA-672) (Erwinia carotovora subsp. atroseptica).